A 146-amino-acid polypeptide reads, in one-letter code: Hemoglobin subunit beta-1 (146 aa).

Residues 2 to 146 (HWTAEEKHLL…VAHALARRYH (145 aa)) enclose the Globin domain. Residues His-63 and His-92 each coordinate heme b.

The protein belongs to the globin family. In terms of assembly, there are three forms of hemoglobin in Sphenodon: A, A' and D. Hb A is a tetramer of two alpha-A and two beta-1, Hb A' is a tetramer of two alpha-a and two beta-2, Hb D is a tetramer of two alpha-D and two beta-2.

Involved in oxygen transport from the lung to the various peripheral tissues. This chain is Hemoglobin subunit beta-1 (HBB1), found in Sphenodon punctatus (Tuatara).